The primary structure comprises 600 residues: MGLCHGKSAAVLEPTVEEEEEGATRVAEAAAAPAKPASPAPSAAAAAAAPAKPGTPKQHKFPFYLPSPLPASSYKGSPANSSVASTPARGGFKRPFPPPSPAKHIRALLARRHGSVKPNEASIPESGEPGVALDKGFGFSRHFAAKYELGREVGRGHFGYTCAATCKKGELKGDDVAVKVIPKAKMTTAIAIEDVRREVRILSSLAGHSNLVQFYDAYEDEENVYIVMELCKGGELLDRILARGGKYSEEDAKVVMRQILSVASFCHLQGVVHRDLKPENFLFSSKDENSAMKVIDFGLSDFVKPDERLNDIVGSAYYVAPEVLHRSYGTEADMWSIGVIVYILLCGSRPFWARTESGIFRAVLKADPSFEEAPWPTLSAEAKDFVRRLLNKDYRKRMTAAQALCHPWIRGTEEVKLPLDMIIYRLMRAYISSSSLRRAALRALAKTLTTDQIYYLREQFELIGPNKSDLITLQNLKTALMKNSTNAMKDSRVVDFVNTISNIQYRKLDFEEFSAAAISVYQMEGLETWEQHARQAYEFFDKEGNRPIVIDELASELGLGPSVPLHVVLQDWIRHPDGKLSFLGFMKLLHGVSSRTIPKT.

The tract at residues 1–99 is disordered; that stretch reads MGLCHGKSAA…GGFKRPFPPP (99 aa). Residues 24–56 are compositionally biased toward low complexity; that stretch reads TRVAEAAAAPAKPASPAPSAAAAAAAPAKPGTP. Positions 74–85 are enriched in polar residues; the sequence is YKGSPANSSVAS. A Protein kinase domain is found at 147 to 409; sequence YELGREVGRG…AAQALCHPWI (263 aa). ATP is bound by residues 153–161 and K179; that span reads VGRGHFGYT. The active-site Proton acceptor is the D275.

The protein belongs to the protein kinase superfamily. Ser/Thr protein kinase family. Autophosphorylated. Highly expressed in roots in the zone of cell division. Expressed in leaf mesophyll cells and at lower levels in mature stems.

The enzyme catalyses L-seryl-[protein] + ATP = O-phospho-L-seryl-[protein] + ADP + H(+). It catalyses the reaction L-threonyl-[protein] + ATP = O-phospho-L-threonyl-[protein] + ADP + H(+). Activated by the binding of calmodulin-like protein 1 (CML1) in the presence of Ca(2+). Functionally, possesses kinase activity in vitro. This is Calcium/calmodulin-dependent serine/threonine-protein kinase 1 (CAMK1) from Oryza sativa subsp. japonica (Rice).